Reading from the N-terminus, the 455-residue chain is Glutamate--tRNA ligase (455 aa).

The short motif at 8–18 is the 'HIGH' region element; the sequence is PSPTGYLHIGG. The short motif at 231 to 235 is the 'KMSKS' region element; the sequence is RLSKR. Lysine 234 is a binding site for ATP.

Belongs to the class-I aminoacyl-tRNA synthetase family. Glutamate--tRNA ligase type 1 subfamily. Monomer.

The protein localises to the cytoplasm. The enzyme catalyses tRNA(Glu) + L-glutamate + ATP = L-glutamyl-tRNA(Glu) + AMP + diphosphate. Its function is as follows. Catalyzes the attachment of glutamate to tRNA(Glu) in a two-step reaction: glutamate is first activated by ATP to form Glu-AMP and then transferred to the acceptor end of tRNA(Glu). This Vesicomyosocius okutanii subsp. Calyptogena okutanii (strain HA) protein is Glutamate--tRNA ligase.